The sequence spans 432 residues: Maltoporin (432 aa).

Positions 1–22 are cleaved as a signal peptide; the sequence is MKKVSVIAAAVAATLAAGSAFA.

It belongs to the porin LamB (TC 1.B.3) family. In terms of assembly, homotrimer formed of three 18-stranded antiparallel beta-barrels, containing three independent channels.

It is found in the cell outer membrane. It catalyses the reaction beta-maltose(in) = beta-maltose(out). Functionally, involved in the transport of maltose and maltodextrins. The polypeptide is Maltoporin (Vibrio parahaemolyticus serotype O3:K6 (strain RIMD 2210633)).